Consider the following 202-residue polypeptide: N-acetyltransferase 9-like protein (202 aa).

Positions 34–184 (EEIRRLTGSE…FTFELPKNRL (151 aa)) constitute an N-acetyltransferase domain.

The protein belongs to the acetyltransferase family. GNAT subfamily.

The sequence is that of N-acetyltransferase 9-like protein from Caenorhabditis elegans.